Reading from the N-terminus, the 171-residue chain is UPF0398 protein M28_Spy1394 (171 aa).

This sequence belongs to the UPF0398 family.

The protein is UPF0398 protein M28_Spy1394 of Streptococcus pyogenes serotype M28 (strain MGAS6180).